A 210-amino-acid polypeptide reads, in one-letter code: Small heat shock protein hspG6 (210 aa).

In terms of domain architecture, sHSP spans 34–210; it reads KTIIDKLPPM…YSNTIKININ (177 aa). The interval 93 to 151 is disordered; that stretch reads VIEKSTSSSTLDSKEDEPSIEEFEDDIKPKSKSDNTTVSTTTTATTKENKEDENKTKST. Positions 126–138 are enriched in low complexity; it reads DNTTVSTTTTATT. The segment covering 139-151 has biased composition (basic and acidic residues); it reads KENKEDENKTKST.

The protein belongs to the small heat shock protein (HSP20) family.

The polypeptide is Small heat shock protein hspG6 (hspG6) (Dictyostelium discoideum (Social amoeba)).